Here is a 194-residue protein sequence, read N- to C-terminus: Peptide deformylase (194 aa).

Cys-105 and His-147 together coordinate Fe cation. Glu-148 is a catalytic residue. Residue His-151 coordinates Fe cation.

The protein belongs to the polypeptide deformylase family. Requires Fe(2+) as cofactor.

The catalysed reaction is N-terminal N-formyl-L-methionyl-[peptide] + H2O = N-terminal L-methionyl-[peptide] + formate. Functionally, removes the formyl group from the N-terminal Met of newly synthesized proteins. Requires at least a dipeptide for an efficient rate of reaction. N-terminal L-methionine is a prerequisite for activity but the enzyme has broad specificity at other positions. This is Peptide deformylase from Flavobacterium psychrophilum (strain ATCC 49511 / DSM 21280 / CIP 103535 / JIP02/86).